The primary structure comprises 66 residues: MPKMKTHRGAAKRVKRTGSGKLKRSRAFTSHLFANKSTKQKRKLRKASLVSKSDMKRVKQLLAYKK.

Residues 1–26 (MPKMKTHRGAAKRVKRTGSGKLKRSR) show a composition bias toward basic residues. The disordered stretch occupies residues 1–49 (MPKMKTHRGAAKRVKRTGSGKLKRSRAFTSHLFANKSTKQKRKLRKASL).

This sequence belongs to the bacterial ribosomal protein bL35 family.

The protein is Large ribosomal subunit protein bL35 of Staphylococcus saprophyticus subsp. saprophyticus (strain ATCC 15305 / DSM 20229 / NCIMB 8711 / NCTC 7292 / S-41).